A 315-amino-acid polypeptide reads, in one-letter code: Methionyl-tRNA formyltransferase (315 aa).

The interval 2 to 189 (SESLRIIFAG…LITTLKQLAD (188 aa)) is N-terminal domain. 113 to 116 (SLLP) is a binding site for (6S)-5,6,7,8-tetrahydrofolate. The interval 210–315 (KEEARIDWSL…EWFVPGNRLV (106 aa)) is C-terminal domain.

The protein belongs to the Fmt family. Monomer.

It catalyses the reaction L-methionyl-tRNA(fMet) + (6R)-10-formyltetrahydrofolate = N-formyl-L-methionyl-tRNA(fMet) + (6S)-5,6,7,8-tetrahydrofolate + H(+). Activity is optimum in the presence of Mg(2+) and K(+). Attaches a formyl group to the free amino group of methionyl-tRNA(fMet). The formyl group appears to play a dual role in the initiator identity of N-formylmethionyl-tRNA by promoting its recognition by IF2 and preventing the misappropriation of this tRNA by the elongation apparatus. The sequence is that of Methionyl-tRNA formyltransferase from Escherichia coli (strain K12).